Reading from the N-terminus, the 154-residue chain is Deoxyuridine 5'-triphosphate nucleotidohydrolase (154 aa).

Residues 64–66, Asn77, 81–83, and Lys91 each bind substrate; these read RSG and TVD. Residues 135–154 are disordered; that stretch reads LADTTRGDGGHGSSGGHASL. Gly residues predominate over residues 144-154; the sequence is GHGSSGGHASL.

This sequence belongs to the dUTPase family. Homotrimer. Mg(2+) is required as a cofactor.

The catalysed reaction is dUTP + H2O = dUMP + diphosphate + H(+). Its pathway is pyrimidine metabolism; dUMP biosynthesis; dUMP from dCTP (dUTP route): step 2/2. Functionally, this enzyme is involved in nucleotide metabolism: it produces dUMP, the immediate precursor of thymidine nucleotides and it decreases the intracellular concentration of dUTP so that uracil cannot be incorporated into DNA. The chain is Deoxyuridine 5'-triphosphate nucleotidohydrolase from Mycolicibacterium vanbaalenii (strain DSM 7251 / JCM 13017 / BCRC 16820 / KCTC 9966 / NRRL B-24157 / PYR-1) (Mycobacterium vanbaalenii).